A 210-amino-acid chain; its full sequence is Phosphate propanoyltransferase (210 aa).

Residue 26–28 participates in CoA binding; it reads VSN. 2 residues coordinate Zn(2+): His-30 and His-32. CoA contacts are provided by Lys-71 and Arg-78. Phosphate is bound at residue Arg-84. 4 residues coordinate Zn(2+): Glu-90, His-138, His-140, and His-186. Residue Asn-193 participates in CoA binding.

It belongs to the PduL family. As to quaternary structure, monomer, when purified in the absence of the encapsulation peptide (EP, residues 1-27). The EP may influence oligomerization. Zn(2+) serves as cofactor.

It localises to the bacterial microcompartment. The catalysed reaction is propanoyl-CoA + phosphate = propanoyl phosphate + CoA. It participates in polyol metabolism; 1,2-propanediol degradation. In terms of biological role, involved in 1,2-propanediol (1,2-PD) utilization in the bacterial microcompartment (BMC) dedicated to 1,2-PD degradation by catalyzing the conversion of propanoyl-CoA to propanoyl-phosphate. Also able to catalyze the reverse reaction. Also has phosphate acetyltransferase activity to a lesser extent. Required for optimal growth on 1,2-PD when the BMC is intact. CoA is regenerated within the BMC (for use by PduP) via this enzyme, although there must also be cofactor transport across the BMC. Directly targeted to the BMC. Functionally, the 1,2-PD-specific bacterial microcompartment (BMC) concentrates low levels of 1,2-PD catabolic enzymes, concentrates volatile reaction intermediates thus enhancing pathway flux and keeps the level of toxic, mutagenic propionaldehyde low. The polypeptide is Phosphate propanoyltransferase (Salmonella typhimurium (strain LT2 / SGSC1412 / ATCC 700720)).